Here is a 372-residue protein sequence, read N- to C-terminus: Adaptive-response sensory kinase SasA (372 aa).

In terms of domain architecture, Histidine kinase spans 147-360; sequence MVAHELRTPL…CFHFTVPVWQ (214 aa). H150 is modified (phosphohistidine; by autocatalysis).

In terms of assembly, homooligomerizes. Interacts with KaiC. Participates in the KaiBC complex, whose core is composed of a KaiC homohexamer and 6 KaiB.

The enzyme catalyses ATP + protein L-histidine = ADP + protein N-phospho-L-histidine.. Its function is as follows. Member of the two-component regulatory system SasA/RpaA involved in genome-wide circadian gene expression. One of several clock output pathways. Participates in the Kai clock protein complex, the main circadian regulator in cyanobacteria, via its interaction with KaiC. KaiC enhances the autophosphorylation activity of SasA, which then transfers its phosphate group to RpaA to activate it. In addition to its output function, recruits fold-shifted KaiB (KaiB(fs)) to KaiC to cooperatively form the KaiB(6):KaiC(6) complex (independent of SasA kinase activity). Required for robustness of the circadian rhythm of gene expression and is involved in clock output, also required for adaptation to light/dark cycles. This chain is Adaptive-response sensory kinase SasA, found in Prochlorococcus marinus (strain MIT 9301).